Reading from the N-terminus, the 330-residue chain is Phenylalanine--tRNA ligase alpha subunit (330 aa).

Residue glutamate 255 participates in Mg(2+) binding.

It belongs to the class-II aminoacyl-tRNA synthetase family. Phe-tRNA synthetase alpha subunit type 1 subfamily. Tetramer of two alpha and two beta subunits. Mg(2+) is required as a cofactor.

It is found in the cytoplasm. The enzyme catalyses tRNA(Phe) + L-phenylalanine + ATP = L-phenylalanyl-tRNA(Phe) + AMP + diphosphate + H(+). The chain is Phenylalanine--tRNA ligase alpha subunit from Acinetobacter baumannii (strain AYE).